Consider the following 1342-residue polypeptide: Putative aldehyde oxidase-like protein (1342 aa).

A disordered region spans residues methionine 1–valine 23. One can recognise an FAD-binding PCMH-type domain in the interval isoleucine 221–serine 408.

The protein belongs to the xanthine dehydrogenase family.

This Oryza sativa subsp. japonica (Rice) protein is Putative aldehyde oxidase-like protein.